The chain runs to 281 residues: Proteasome subunit beta (281 aa).

Positions 1–53 are cleaved as a propeptide — removed in mature form; by autocatalysis; the sequence is MEANTRSTGRLPAAFLTPGSSSFMDFLSDHQPELLPGKRQLPPTQGVIEAPHG. Thr-54 serves as the catalytic Nucleophile.

The protein belongs to the peptidase T1B family. The 20S proteasome core is composed of 14 alpha and 14 beta subunits that assemble into four stacked heptameric rings, resulting in a barrel-shaped structure. The two inner rings, each composed of seven catalytic beta subunits, are sandwiched by two outer rings, each composed of seven alpha subunits. The catalytic chamber with the active sites is on the inside of the barrel. Has a gated structure, the ends of the cylinder being occluded by the N-termini of the alpha-subunits. Is capped by the proteasome-associated ATPase, ARC.

The protein localises to the cytoplasm. The catalysed reaction is Cleavage of peptide bonds with very broad specificity.. Its pathway is protein degradation; proteasomal Pup-dependent pathway. Its activity is regulated as follows. The formation of the proteasomal ATPase ARC-20S proteasome complex, likely via the docking of the C-termini of ARC into the intersubunit pockets in the alpha-rings, may trigger opening of the gate for substrate entry. Interconversion between the open-gate and close-gate conformations leads to a dynamic regulation of the 20S proteasome proteolysis activity. Functionally, component of the proteasome core, a large protease complex with broad specificity involved in protein degradation. This chain is Proteasome subunit beta, found in Streptomyces scabiei (strain 87.22).